Consider the following 350-residue polypeptide: Dihydroorotase (350 aa).

2 residues coordinate Zn(2+): His17 and His19. Substrate is bound by residues 19 to 21 and Asn45; that span reads HLR. Residues Lys103, His140, and His178 each contribute to the Zn(2+) site. Lys103 carries the N6-carboxylysine modification. Residue His140 participates in substrate binding. Leu223 lines the substrate pocket. Asp251 contributes to the Zn(2+) binding site. Asp251 is an active-site residue. The substrate site is built by His255 and Ala267.

This sequence belongs to the metallo-dependent hydrolases superfamily. DHOase family. Class II DHOase subfamily. In terms of assembly, homodimer. The cofactor is Zn(2+).

It carries out the reaction (S)-dihydroorotate + H2O = N-carbamoyl-L-aspartate + H(+). It functions in the pathway pyrimidine metabolism; UMP biosynthesis via de novo pathway; (S)-dihydroorotate from bicarbonate: step 3/3. Functionally, catalyzes the reversible cyclization of carbamoyl aspartate to dihydroorotate. This chain is Dihydroorotase, found in Erwinia tasmaniensis (strain DSM 17950 / CFBP 7177 / CIP 109463 / NCPPB 4357 / Et1/99).